We begin with the raw amino-acid sequence, 327 residues long: MEEEFKDKGLPPTLLHLIPDGREWKVKEADGEGSRNTNLDADEDKELELKLGLPGVQQEERAADSREKIQQQQRESSSEPSIGCFPTHSKPTTSIGTTGAKRGFFAIVGATLEGYNQSHRDTEECGKELTLGDENMAGERKKGCCPSPPCSAAAHSSNPQGRGAIPPVVGWPPIRSFRRNLTNGSSFKQSPERQNDEADDKAKPICKKRPLVKINMDGIPIGRKVDLQIYDSYQKLSSAVEELFRGFLEAQKDLSCAESGEQGAEDKIFSGLLDGTGVYTLVYEDNDGDRMLAGDIPWKVFVSTVKRLRVMRRSELPHDMIGADPVK.

3 disordered regions span residues 26-45 (VKEADGEGSRNTNLDADEDK), 52-98 (GLPG…IGTT), and 180-202 (NLTNGSSFKQSPERQNDEADDKA). The short motif at 49 to 53 (LKLGL) is the EAR-like (transcriptional repression) element. Positions 58–69 (QEERAADSREKI) are enriched in basic and acidic residues. The span at 70 to 82 (QQQQRESSSEPSI) shows a compositional bias: low complexity. Residues 180 to 189 (NLTNGSSFKQ) show a composition bias toward polar residues. Residues 190–202 (SPERQNDEADDKA) are compositionally biased toward basic and acidic residues. In terms of domain architecture, PB1 spans 209–313 (RPLVKINMDG…TVKRLRVMRR (105 aa)).

It belongs to the Aux/IAA family. Homodimers and heterodimers. In terms of tissue distribution, highly expressed in flowers. Expressed in roots and etiolated seedlings.

It is found in the nucleus. Its function is as follows. Aux/IAA proteins are short-lived transcriptional factors that function as repressors of early auxin response genes at low auxin concentrations. This is Auxin-responsive protein IAA18 (IAA18) from Oryza sativa subsp. japonica (Rice).